Reading from the N-terminus, the 550-residue chain is Glucose-6-phosphate isomerase 1 (550 aa).

The active-site Proton donor is the E353. Catalysis depends on residues H384 and K512.

It belongs to the GPI family.

The protein resides in the cytoplasm. The enzyme catalyses alpha-D-glucose 6-phosphate = beta-D-fructose 6-phosphate. Its pathway is carbohydrate biosynthesis; gluconeogenesis. The protein operates within carbohydrate degradation; glycolysis; D-glyceraldehyde 3-phosphate and glycerone phosphate from D-glucose: step 2/4. Functionally, catalyzes the reversible isomerization of glucose-6-phosphate to fructose-6-phosphate. This is Glucose-6-phosphate isomerase 1 from Thiobacillus denitrificans (strain ATCC 25259 / T1).